A 210-amino-acid chain; its full sequence is Outer-membrane lipoprotein LolB (210 aa).

Residues 1-26 (MSKLKIDTKRRFSLLIALVLIISLSS) form the signal peptide. C27 carries the N-palmitoyl cysteine lipid modification. The S-diacylglycerol cysteine moiety is linked to residue C27.

The protein belongs to the LolB family. As to quaternary structure, monomer.

It localises to the cell outer membrane. Its function is as follows. Plays a critical role in the incorporation of lipoproteins in the outer membrane after they are released by the LolA protein. This is Outer-membrane lipoprotein LolB from Francisella tularensis subsp. holarctica (strain FTNF002-00 / FTA).